The primary structure comprises 247 residues: Myeloid leukemia factor 2 (247 aa).

A disordered region spans residues 122–247 (ETSEMRSAPG…PSRQSRRYDW (126 aa)). Basic and acidic residues predominate over residues 134-144 (RETRRTVRDSD). Over residues 154–169 (HHIRDRAHILQRSRNH) the composition is skewed to basic residues. Residues 170-179 (RTGDQEERQD) show a composition bias toward basic and acidic residues. Residues 182–192 (NLDESEAAAFD) are compositionally biased toward acidic residues. Basic and acidic residues predominate over residues 193-225 (DEWRRETSRYRQQRPLEFRRHEASVGGGRRAEG). Phosphoserine is present on residues S216, S237, and S239.

This sequence belongs to the MLF family.

The protein resides in the cytoplasm. The protein localises to the nucleus. The polypeptide is Myeloid leukemia factor 2 (Mlf2) (Mus musculus (Mouse)).